The sequence spans 113 residues: Small ribosomal subunit protein bS6 (113 aa).

It belongs to the bacterial ribosomal protein bS6 family.

Functionally, binds together with bS18 to 16S ribosomal RNA. The protein is Small ribosomal subunit protein bS6 (rpsF) of Buchnera aphidicola subsp. Acyrthosiphon pisum (strain APS) (Acyrthosiphon pisum symbiotic bacterium).